A 172-amino-acid chain; its full sequence is 3-hydroxydecanoyl-[acyl-carrier-protein] dehydratase (172 aa).

Residue His-71 is part of the active site.

Belongs to the thioester dehydratase family. FabA subfamily. Homodimer.

Its subcellular location is the cytoplasm. The enzyme catalyses a (3R)-hydroxyacyl-[ACP] = a (2E)-enoyl-[ACP] + H2O. It catalyses the reaction (3R)-hydroxydecanoyl-[ACP] = (2E)-decenoyl-[ACP] + H2O. It carries out the reaction (2E)-decenoyl-[ACP] = (3Z)-decenoyl-[ACP]. The protein operates within lipid metabolism; fatty acid biosynthesis. In terms of biological role, necessary for the introduction of cis unsaturation into fatty acids. Catalyzes the dehydration of (3R)-3-hydroxydecanoyl-ACP to E-(2)-decenoyl-ACP and then its isomerization to Z-(3)-decenoyl-ACP. Can catalyze the dehydratase reaction for beta-hydroxyacyl-ACPs with saturated chain lengths up to 16:0, being most active on intermediate chain length. The polypeptide is 3-hydroxydecanoyl-[acyl-carrier-protein] dehydratase (Salmonella agona (strain SL483)).